A 383-amino-acid polypeptide reads, in one-letter code: S-adenosylmethionine synthase (383 aa).

H16 contributes to the ATP binding site. D18 is a binding site for Mg(2+). Residue E44 coordinates K(+). The L-methionine site is built by E57 and Q98. The flexible loop stretch occupies residues 98 to 108; it reads QSPDIAMGVDI. ATP-binding positions include 158-160, 226-227, D235, 241-242, A258, and K262; these read DQK, RF, and RK. Residue D235 coordinates L-methionine. L-methionine is bound at residue K266.

The protein belongs to the AdoMet synthase family. As to quaternary structure, homotetramer; dimer of dimers. Mg(2+) serves as cofactor. K(+) is required as a cofactor.

It is found in the cytoplasm. The enzyme catalyses L-methionine + ATP + H2O = S-adenosyl-L-methionine + phosphate + diphosphate. Its pathway is amino-acid biosynthesis; S-adenosyl-L-methionine biosynthesis; S-adenosyl-L-methionine from L-methionine: step 1/1. Its function is as follows. Catalyzes the formation of S-adenosylmethionine (AdoMet) from methionine and ATP. The overall synthetic reaction is composed of two sequential steps, AdoMet formation and the subsequent tripolyphosphate hydrolysis which occurs prior to release of AdoMet from the enzyme. This Fusobacterium nucleatum subsp. nucleatum (strain ATCC 25586 / DSM 15643 / BCRC 10681 / CIP 101130 / JCM 8532 / KCTC 2640 / LMG 13131 / VPI 4355) protein is S-adenosylmethionine synthase.